A 451-amino-acid chain; its full sequence is NAC domain containing protein 52 (451 aa).

The disordered stretch occupies residues 1–21 (MGRESVAVVTAPPSATAPGTA). The NAC domain maps to 27-178 (LAPGFRFHPT…AYVLCRVFHK (152 aa)). The DNA-binding element occupies 126–184 (LGMKKTLVFHSGRAPDGLRTNWVMHEYRLVEYETEKNGNLVQDAYVLCRVFHKNNIGPP). Disordered regions lie at residues 255–337 (DQQN…TTTT) and 370–400 (KKEK…KVND). Basic and acidic residues predominate over residues 256–270 (QQNHHENDLKPEEHN). Residues 272–292 (NNNYDENEETLKREQMEEEER) adopt a coiled-coil conformation. The span at 318–337 (ESNNNSSRNTQDHCSSTTTT) shows a compositional bias: low complexity. Residues 370 to 384 (KKEKPQQPLRPHKEP) are compositionally biased toward basic and acidic residues. Positions 398-446 (VNDLQKEIHQMSVERETFKLEMMSAEAMISILQSRIDALRQENEELKKN) form a coiled coil.

In terms of assembly, interacts with JMJ14 and NAC050. In terms of tissue distribution, mostly expressed in floral organs, and, at low levels, in other organs.

The protein localises to the nucleus. Transcriptional repressor that binds to the motif 5'-(C/T)A(C/A)G-3' in the promoter of target genes. Also binds to the 5'-CTTGNNNNNCAAG-3' consensus sequence in chromatin. Can bind to the mitochondrial dysfunction motif (MDM) present in the upstream regions of mitochondrial dysfunction stimulon (MDS) genes involved in mitochondrial retrograde regulation (MRR). Together with NAC050 and JMJ14, regulates gene expression and flowering time by associating with the histone demethylase JMJ14, probably by the promotion of RNA-mediated gene silencing. Regulates siRNA-dependent post-transcriptional gene silencing (PTGS) through SGS3 expression modulation. Required during pollen development. This chain is NAC domain containing protein 52, found in Arabidopsis thaliana (Mouse-ear cress).